The following is a 233-amino-acid chain: Gamma-interferon-responsive lysosomal thiol protein (233 aa).

The N-terminal stretch at 1–26 is a signal peptide; it reads MVSSSLTKLVFFGCLLLLTFTDNLVA. Cys42 and Cys45 are oxidised to a cystine. Residues Asn80 and Asn207 are each glycosylated (N-linked (GlcNAc...) asparagine). Positions 200–233 are cleaved as a propeptide — removed in mature form; it reads TTLPKVCNSSASMSKSPERKWKLQVSYANKATNY.

This sequence belongs to the GILT family. As to quaternary structure, dimer; disulfide-linked. Expressed in the outer integument of seed coat.

The protein resides in the secreted. It is found in the lysosome. Functionally, lysosomal thiol reductase that can reduce protein disulfide bonds. May facilitate the complete unfolding of proteins destined for lysosomal degradation. This is Gamma-interferon-responsive lysosomal thiol protein from Arabidopsis thaliana (Mouse-ear cress).